Consider the following 217-residue polypeptide: tRNA (guanine-N(7)-)-methyltransferase (217 aa).

S-adenosyl-L-methionine is bound by residues glutamate 48, glutamate 73, asparagine 100, and aspartate 123. The active site involves aspartate 123. Residues lysine 127 and aspartate 159 each contribute to the substrate site.

It belongs to the class I-like SAM-binding methyltransferase superfamily. TrmB family.

The enzyme catalyses guanosine(46) in tRNA + S-adenosyl-L-methionine = N(7)-methylguanosine(46) in tRNA + S-adenosyl-L-homocysteine. Its pathway is tRNA modification; N(7)-methylguanine-tRNA biosynthesis. Functionally, catalyzes the formation of N(7)-methylguanine at position 46 (m7G46) in tRNA. The chain is tRNA (guanine-N(7)-)-methyltransferase from Leptospira interrogans serogroup Icterohaemorrhagiae serovar Lai (strain 56601).